Here is a 67-residue protein sequence, read N- to C-terminus: Toxin Bl-1 (67 aa).

One can recognise an LCN-type CS-alpha/beta domain in the interval 2–66; it reads RDGYISQPEN…GIIVDGIKCH (65 aa). Disulfide bonds link cysteine 12–cysteine 65, cysteine 16–cysteine 37, cysteine 23–cysteine 47, and cysteine 27–cysteine 49. At threonine 67 the chain carries Threonine amide.

Belongs to the long (4 C-C) scorpion toxin superfamily. Sodium channel inhibitor family. Alpha subfamily. In terms of tissue distribution, expressed by the venom gland.

The protein localises to the secreted. Its function is as follows. Alpha toxins bind voltage-independently at site-3 of sodium channels (Nav) and inhibit the inactivation of the activated channels, thereby blocking neuronal transmission. Is highly toxic to insects (tested on the crickets A.domesticus). This peptide may also be toxic to mammals, since it is similar to alpha-like toxins that are active on both insect and mammalian sodium channels. The chain is Toxin Bl-1 from Buthacus leptochelys (Egyptian fat-tailed scorpion).